The sequence spans 1047 residues: Rab11 family-interacting protein 3 (1047 aa).

3 disordered regions span residues 1–107 (MELC…WPQE), 311–335 (SHSC…DVSH), and 475–496 (PGPP…TAQE). Residues 64–73 (EPHAPSRWAK) show a composition bias toward basic and acidic residues. 2 EF-hand domains span residues 496–531 (EEGA…YGAE) and 528–563 (YGAE…IRNG). Residues Asp-509, Asp-511, Asp-513, Asp-520, Asp-541, Ser-543, and Asp-552 each contribute to the Ca(2+) site. Phosphoserine occurs at positions 641, 765, and 829. A coiled-coil region spans residues 750–985 (EEDIADKVIF…NGQIITLSIQ (236 aa)). The segment at 775–879 (GEQHGRLRQE…MLDEIEELTQ (105 aa)) is ARF-binding domain (ABD). Residues 882–906 (SEEQENKRKMGDRLSHERHQFQRDK) form a disordered region. 2 positions are modified to phosphoserine: Ser-938 and Ser-939. Residues 985-1047 (QGAKSLFSTS…ETNPSILEVK (63 aa)) form the FIP-RBD domain.

As to quaternary structure, homodimer. Interacts with RAB11A; the interaction is direct and is required for the recruitment to endosomes. Interacts with RAB11B. Forms a ternary complex with RAB11A and dynein intermediate chain DYNC1LI1; RAB11FIP3 links RAB11A to dynein and the interaction regulates endocytic trafficking. Interacts with dynein intermediate chain and dynactin (DCTN1); the interaction activates dynein processivity. Interacts with ARF6 and EXOC7; the interaction serves for recruitment and tethering of recycling endosomes-derived vesicles to the cleavage furrow/midbody. Interacts with RACGAP1/MgcRacGAP; the interaction occurs at late telophase and is required for recruitment and tethering of recycling endosomes-derived vesicles to the cleavage furrow/midbody. Forms a complex with RAB11A and Rabin8/RAB3IP, probably a heterohexamer with two of each protein subunit, where RAB3IP and RAB11FIP3 simultaneously bind to RAB11A; the complex promotes preciliary trafficking. Forms a complex containing RAB11A, ASAP1, RAB3IP, RAP11FIP3 and ARF4; the complex promotes preciliary trafficking; the complex binds to RHO in photoreceptor cells and promotes RHO ciliary transport. Interacts with RAB11FIP4. Interacts with RAB25.

It localises to the recycling endosome membrane. It is found in the cytoplasm. The protein localises to the cytoskeleton. Its subcellular location is the microtubule organizing center. The protein resides in the centrosome. It localises to the cleavage furrow. It is found in the midbody. The protein localises to the golgi apparatus membrane. Its subcellular location is the golgi apparatus. The protein resides in the trans-Golgi network membrane. Functionally, downstream effector molecule for Rab11 GTPase which is involved in endocytic trafficking, cytokinesis and intracellular ciliogenesis by participating in membrane delivery. Recruited by Rab11 to endosomes where it links Rab11 to dynein motor complex. The functional Rab11-RAB11FIP3-dynein complex regulates the movement of peripheral sorting endosomes (SE) along microtubule tracks toward the microtubule organizing center/centrosome, generating the endocytic recycling compartment (ERC) during interphase of cell cycle. Facilitates the interaction between dynein and dynactin and activates dynein processivity. Binding with ASAP1 is needed to regulate the pericentrosomal localization of recycling endosomes. The Rab11-RAB11FIP3 complex is also implicated in the transport during telophase of vesicles derived from recycling endosomes to the cleavage furrow via centrosome-anchored microtubules, where the vesicles function to deliver membrane during late cytokinesis and abscission. The recruitment of Rab11-RAB11FIP3-containing endosomes to the cleavage furrow and tethering to the midbody is co-mediated by RAB11FIP3 interaction with ARF6-exocyst and RACGAP1-MKLP1 tethering complexes. Also involved in the Rab11-Rabin8-Rab8 ciliogenesis cascade by facilitating the orderly assembly of a ciliary targeting complex containing Rab11, ASAP1, Rabin8/RAB3IP, RAB11FIP3 and ARF4, which directs preciliary vesicle trafficking to mother centriole and ciliogenesis initiation. Also promotes the activity of Rab11 and ASAP1 in the ARF4-dependent Golgi-to-cilia transport of the sensory receptor rhodopsin. Competes with WDR44 for binding to Rab11, which controls intracellular ciliogenesis pathway. May play a role in breast cancer cell motility by regulating actin cytoskeleton. The chain is Rab11 family-interacting protein 3 from Mus musculus (Mouse).